Consider the following 186-residue polypeptide: Imidazoleglycerol-phosphate dehydratase (186 aa).

The protein belongs to the imidazoleglycerol-phosphate dehydratase family.

Its subcellular location is the cytoplasm. It catalyses the reaction D-erythro-1-(imidazol-4-yl)glycerol 3-phosphate = 3-(imidazol-4-yl)-2-oxopropyl phosphate + H2O. The protein operates within amino-acid biosynthesis; L-histidine biosynthesis; L-histidine from 5-phospho-alpha-D-ribose 1-diphosphate: step 6/9. The polypeptide is Imidazoleglycerol-phosphate dehydratase (Dictyoglomus turgidum (strain DSM 6724 / Z-1310)).